Reading from the N-terminus, the 167-residue chain is Periplasmic nitrate reductase, electron transfer subunit (167 aa).

The N-terminal stretch at 1–34 (MRRAHRAGERVMMKRFGIALLAVAIAAGASSLTA) is a signal peptide. The segment at 40 to 65 (GLHGPAPLNDEGPAPPMLPNRNTSER) is disordered. His-79, Cys-93, Cys-96, His-97, His-114, Cys-133, Cys-136, and His-137 together coordinate heme c.

It belongs to the NapB family. Component of the periplasmic nitrate reductase NapAB complex composed of NapA and NapB. Post-translationally, binds 2 heme C groups per subunit.

It is found in the periplasm. Its function is as follows. Electron transfer subunit of the periplasmic nitrate reductase complex NapAB. Receives electrons from the membrane-anchored tetraheme c-type NapC protein and transfers these to NapA subunit, thus allowing electron flow between membrane and periplasm. Essential for periplasmic nitrate reduction with nitrate as the terminal electron acceptor. In Bradyrhizobium japonicum, this protein is Periplasmic nitrate reductase, electron transfer subunit.